Reading from the N-terminus, the 591-residue chain is L-fucose isomerase (591 aa).

Catalysis depends on proton acceptor residues E337 and D361. Residues E337, D361, and H528 each coordinate Mn(2+).

Belongs to the L-fucose isomerase family. As to quaternary structure, homohexamer. Mn(2+) is required as a cofactor.

It localises to the cytoplasm. It catalyses the reaction L-fucose = L-fuculose. Its pathway is carbohydrate degradation; L-fucose degradation; L-lactaldehyde and glycerone phosphate from L-fucose: step 1/3. In terms of biological role, converts the aldose L-fucose into the corresponding ketose L-fuculose. This Escherichia coli (strain SE11) protein is L-fucose isomerase.